Consider the following 177-residue polypeptide: Adenine phosphoribosyltransferase (177 aa).

The protein belongs to the purine/pyrimidine phosphoribosyltransferase family. As to quaternary structure, homodimer.

The protein resides in the cytoplasm. It carries out the reaction AMP + diphosphate = 5-phospho-alpha-D-ribose 1-diphosphate + adenine. Its pathway is purine metabolism; AMP biosynthesis via salvage pathway; AMP from adenine: step 1/1. Functionally, catalyzes a salvage reaction resulting in the formation of AMP, that is energically less costly than de novo synthesis. The polypeptide is Adenine phosphoribosyltransferase (Chlorobium phaeobacteroides (strain DSM 266 / SMG 266 / 2430)).